We begin with the raw amino-acid sequence, 117 residues long: Large ribosomal subunit protein bL19 (117 aa).

It belongs to the bacterial ribosomal protein bL19 family.

Functionally, this protein is located at the 30S-50S ribosomal subunit interface and may play a role in the structure and function of the aminoacyl-tRNA binding site. This is Large ribosomal subunit protein bL19 from Sorangium cellulosum (strain So ce56) (Polyangium cellulosum (strain So ce56)).